The following is a 278-amino-acid chain: Ras-related protein rapC (278 aa).

10–17 (GASGTGKT) contributes to the GTP binding site. An Effector region motif is present at residues 32–40 (YDPTIEDLY). GTP is bound by residues 58 to 62 (DTSGT) and 119 to 122 (NKCD). Disordered stretches follow at residues 176–209 (NGSS…SSSS) and 236–278 (STSS…CLIM). Composition is skewed to low complexity over residues 198 to 209 (GSNNSSINSSSS) and 236 to 251 (STSS…SQTN). Cysteine 275 carries the cysteine methyl ester modification. Residue cysteine 275 is the site of S-geranylgeranyl cysteine attachment. A propeptide spans 276–278 (LIM) (removed in mature form).

The protein belongs to the small GTPase superfamily. Ras family.

Its subcellular location is the cell membrane. It catalyses the reaction GTP + H2O = GDP + phosphate + H(+). The protein is Ras-related protein rapC (rapC) of Dictyostelium discoideum (Social amoeba).